The following is a 465-amino-acid chain: 3-isopropylmalate dehydratase large subunit (465 aa).

Positions 346, 406, and 409 each coordinate [4Fe-4S] cluster.

This sequence belongs to the aconitase/IPM isomerase family. LeuC type 1 subfamily. In terms of assembly, heterodimer of LeuC and LeuD. It depends on [4Fe-4S] cluster as a cofactor.

The enzyme catalyses (2R,3S)-3-isopropylmalate = (2S)-2-isopropylmalate. It functions in the pathway amino-acid biosynthesis; L-leucine biosynthesis; L-leucine from 3-methyl-2-oxobutanoate: step 2/4. In terms of biological role, catalyzes the isomerization between 2-isopropylmalate and 3-isopropylmalate, via the formation of 2-isopropylmaleate. The polypeptide is 3-isopropylmalate dehydratase large subunit (Psychromonas ingrahamii (strain DSM 17664 / CCUG 51855 / 37)).